A 472-amino-acid polypeptide reads, in one-letter code: UDP-N-acetylmuramate--L-alanine ligase (472 aa).

Residue 118-124 coordinates ATP; it reads GTHGKTT.

It belongs to the MurCDEF family.

It is found in the cytoplasm. The enzyme catalyses UDP-N-acetyl-alpha-D-muramate + L-alanine + ATP = UDP-N-acetyl-alpha-D-muramoyl-L-alanine + ADP + phosphate + H(+). It participates in cell wall biogenesis; peptidoglycan biosynthesis. In terms of biological role, cell wall formation. In Methylococcus capsulatus (strain ATCC 33009 / NCIMB 11132 / Bath), this protein is UDP-N-acetylmuramate--L-alanine ligase.